Reading from the N-terminus, the 185-residue chain is Pyridoxal 5'-phosphate synthase subunit PdxT (185 aa).

46-48 (GES) serves as a coordination point for L-glutamine. Residue C78 is the Nucleophile of the active site. Residues R106 and 132-133 (IR) each bind L-glutamine. Residues H168 and E170 each act as charge relay system in the active site.

This sequence belongs to the glutaminase PdxT/SNO family. In the presence of PdxS, forms a dodecamer of heterodimers. Only shows activity in the heterodimer.

It catalyses the reaction aldehydo-D-ribose 5-phosphate + D-glyceraldehyde 3-phosphate + L-glutamine = pyridoxal 5'-phosphate + L-glutamate + phosphate + 3 H2O + H(+). It carries out the reaction L-glutamine + H2O = L-glutamate + NH4(+). Its pathway is cofactor biosynthesis; pyridoxal 5'-phosphate biosynthesis. Its function is as follows. Catalyzes the hydrolysis of glutamine to glutamate and ammonia as part of the biosynthesis of pyridoxal 5'-phosphate. The resulting ammonia molecule is channeled to the active site of PdxS. This is Pyridoxal 5'-phosphate synthase subunit PdxT from Corynebacterium diphtheriae (strain ATCC 700971 / NCTC 13129 / Biotype gravis).